Here is a 144-residue protein sequence, read N- to C-terminus: Large-conductance mechanosensitive channel (144 aa).

2 helical membrane passes run 21–41 (VGIIIGAAFGKIVSSLVANVI) and 76–96 (GIFLQNIFDFIIVAFAVFCII). Positions 105–144 (QRGGKTRRAVQTECGRDAAYRDPRSLETTKQRHGAGYNDD) are disordered. The segment covering 118–134 (CGRDAAYRDPRSLETTK) has biased composition (basic and acidic residues).

It belongs to the MscL family. As to quaternary structure, homopentamer.

Its subcellular location is the cell inner membrane. Its function is as follows. Channel that opens in response to stretch forces in the membrane lipid bilayer. May participate in the regulation of osmotic pressure changes within the cell. This Sodalis glossinidius (strain morsitans) protein is Large-conductance mechanosensitive channel.